The following is a 249-amino-acid chain: Cell division protein DivIB (249 aa).

Over 1 to 19 the chain is Cytoplasmic; it reads MKEENEYIVKRRKKRRRKR. A helical transmembrane segment spans residues 20 to 40; the sequence is ITIFLFLLICILVTLCLKLPY. The POTRA domain occupies 41-109; that stretch reads FNIKYINVEG…NTIDIIVKER (69 aa). Topologically, residues 41-249 are extracellular; sequence FNIKYINVEG…KGNPVYSLQQ (209 aa).

The protein belongs to the FtsQ/DivIB family. DivIB subfamily.

Its subcellular location is the cell membrane. Cell division protein that may be involved in stabilizing or promoting the assembly of the division complex. The sequence is that of Cell division protein DivIB from Clostridium acetobutylicum (strain ATCC 824 / DSM 792 / JCM 1419 / IAM 19013 / LMG 5710 / NBRC 13948 / NRRL B-527 / VKM B-1787 / 2291 / W).